The chain runs to 1149 residues: Bone sialoprotein-binding protein (1149 aa).

Residues 1-52 (MINRDNKKAITKKGMISNRLNKFSIRKYTVGTASILVGTTLIFGLGNQEAKA) form the signal peptide. The tract at residues 53 to 601 (AENTSTENAK…GDGTVKPEEK (549 aa)) is ligand binding A region. Disordered regions lie at residues 54 to 249 (ENTS…TAPT) and 675 to 697 (LPTK…VTVK). Basic and acidic residues predominate over residues 61–75 (AKQDEASASDNKEVV). Polar residues predominate over residues 77–89 (ETENNSTQKNDLT). Residues 92-106 (IKKETNTDSHQEAKE) show a composition bias toward basic and acidic residues. Over residues 109–126 (TTSSTQQQQNNATTSTET) the composition is skewed to low complexity. Positions 130–145 (NIEKENVKPSTDKTAT) are enriched in basic and acidic residues. Positions 158–205 (PNNTNNDVTTKPSTSEIQTTPTTPQESTNIENSQPQPTPSKVDNQVTD) are enriched in polar residues. Basic and acidic residues predominate over residues 216-241 (SKEELKNNPEKLKELVRNDSNTDRST). CNA-B domains lie at 602-714 (LYKI…YKEP), 715-824 (KYNL…YKTP), and 825-935 (KYSL…EEDT). Positions 896-1124 (TQTGTNTTED…TGSENNGSNN (229 aa)) are disordered. Composition is skewed to acidic residues over residues 903–913 (TEDDKDADGGE) and 930–1088 (YFEE…DSDS). The LPXTG sorting signal motif lies at 1112-1116 (LPETG). At Thr1115 the chain carries Pentaglycyl murein peptidoglycan amidated threonine. Residues 1116–1149 (GSENNGSNNATLFGGLFAALGSLLLFGRRKKQNK) constitute a propeptide, removed by sortase.

It belongs to the serine-aspartate repeat-containing protein (SDr) family.

It is found in the secreted. Its subcellular location is the cell wall. Its function is as follows. Specifically interacts with bone sialoprotein (BSP), a glycoprotein of bone and dentin extracellular matrix. Could contribute to staphylococcal osteomyelitis and arthritis. The chain is Bone sialoprotein-binding protein (bbp) from Staphylococcus aureus.